The following is a 262-amino-acid chain: Snake venom serine proteinase 9 (262 aa).

The N-terminal stretch at 1 to 18 (MVLIRVLANLLILQLSYA) is a signal peptide. Residues 19 to 24 (QKSSEL) constitute a propeptide that is removed on maturation. One can recognise a Peptidase S1 domain in the interval 25–253 (VIGGDECNID…HLDWIQSIIA (229 aa)). Cystine bridges form between C31–C165, C52–C68, C144–C214, C176–C193, and C204–C229. H67 (charge relay system) is an active-site residue. N105 carries an N-linked (GlcNAc...) asparagine glycan. D112 serves as the catalytic Charge relay system. S208 functions as the Charge relay system in the catalytic mechanism.

The protein belongs to the peptidase S1 family. Snake venom subfamily. Monomer. As to expression, expressed by the venom gland.

It localises to the secreted. Its function is as follows. Snake venom serine protease that may act in the hemostasis system of the prey. In Crotalus adamanteus (Eastern diamondback rattlesnake), this protein is Snake venom serine proteinase 9.